The primary structure comprises 559 residues: AP-4 complex accessory subunit tepsin (559 aa).

An ENTH domain is found at 2 to 135 (LDRLAFLQQL…FSESIPSPSH (134 aa)). Disordered stretches follow at residues 131 to 157 (PSPS…APAL), 214 to 290 (AIPS…ESLD), and 472 to 491 (PNGA…SDPA). Low complexity-rich tracts occupy residues 144–154 (QSGMGSQASSA) and 266–281 (SRSS…DGQS). Residues 472–485 (PNGAANQKNPNGST) show a composition bias toward polar residues.

Its subcellular location is the golgi apparatus. It localises to the trans-Golgi network membrane. The protein resides in the cytoplasmic vesicle. It is found in the cytoplasm. The protein localises to the cytosol. In terms of biological role, may play a role in vesicular trafficking of proteins at the trans-Golgi network. In Xenopus laevis (African clawed frog), this protein is AP-4 complex accessory subunit tepsin.